Here is a 179-residue protein sequence, read N- to C-terminus: MSRIGKLPIKIPANVDITCSGPDLTVKGKFGTLHNTIPDAIGIEEIDGSLIVNVKDNTRSNRALHGLYRTLINNMVTGVSEQFQLTLNLQGVGYRASVQGNSIILNLGYSHPVELVIPEGISVEVVQNTTINLKACDKGNLGLFASNIRSWRPPEPYKGKGILYKGEIVKRKAGKSGKK.

Belongs to the universal ribosomal protein uL6 family. Part of the 50S ribosomal subunit.

The protein localises to the plastid. It is found in the chloroplast. In terms of biological role, binds 23S rRNA. In Trieres chinensis (Marine centric diatom), this protein is Large ribosomal subunit protein uL6c (rpl6).